Reading from the N-terminus, the 706-residue chain is Paxillin-like protein 1 (706 aa).

Disordered regions lie at residues 24–192 (ERAG…EQDL), 222–258 (VLDQKLGKEQQKEESSIEYESEGQQEDENDIESLNFE), 279–341 (AKQE…TKVE), and 514–537 (IDNSKSNDSHVLPNGGTTRYSSDA). The span at 35–64 (PFSSQRNASTGSLQASVKSPPITRQRNVSA) shows a compositional bias: polar residues. Phosphoserine occurs at positions 43 and 63. Low complexity-rich tracts occupy residues 73 to 86 (KSAYTASSKSAYSS) and 117 to 129 (SSRPSDISRSISR). Composition is skewed to basic and acidic residues over residues 130–150 (PSERASQEDPFRFERDLDRQA) and 222–236 (VLDQKLGKEQQKEES). Residues 237–252 (SIEYESEGQQEDENDI) are compositionally biased toward acidic residues. Positions 279–290 (AKQEEKNTEPKI) are enriched in basic and acidic residues. A compositionally biased stretch (polar residues) spans 296–308 (TRESNTPSLTMNA). LIM zinc-binding domains are found at residues 556–612 (CRAC…CQKH) and 621–672 (CKVC…CGNH).

The polypeptide is Paxillin-like protein 1 (PXL1) (Saccharomyces cerevisiae (strain ATCC 204508 / S288c) (Baker's yeast)).